The sequence spans 262 residues: Hydroxyethylthiazole kinase (262 aa).

Met44 is a substrate binding site. Arg118 and Thr166 together coordinate ATP. Gly193 serves as a coordination point for substrate.

The protein belongs to the Thz kinase family. It depends on Mg(2+) as a cofactor.

It carries out the reaction 5-(2-hydroxyethyl)-4-methylthiazole + ATP = 4-methyl-5-(2-phosphooxyethyl)-thiazole + ADP + H(+). The protein operates within cofactor biosynthesis; thiamine diphosphate biosynthesis; 4-methyl-5-(2-phosphoethyl)-thiazole from 5-(2-hydroxyethyl)-4-methylthiazole: step 1/1. Its function is as follows. Catalyzes the phosphorylation of the hydroxyl group of 4-methyl-5-beta-hydroxyethylthiazole (THZ). This Chlamydia felis (strain Fe/C-56) (Chlamydophila felis) protein is Hydroxyethylthiazole kinase.